The chain runs to 214 residues: tRNA (guanine-N(7)-)-methyltransferase (214 aa).

4 residues coordinate S-adenosyl-L-methionine: glutamate 43, glutamate 68, aspartate 95, and aspartate 117. Aspartate 117 is a catalytic residue. Residues lysine 121, aspartate 153, and 191–194 contribute to the substrate site; that span reads TEYE.

It belongs to the class I-like SAM-binding methyltransferase superfamily. TrmB family.

It carries out the reaction guanosine(46) in tRNA + S-adenosyl-L-methionine = N(7)-methylguanosine(46) in tRNA + S-adenosyl-L-homocysteine. It participates in tRNA modification; N(7)-methylguanine-tRNA biosynthesis. Its function is as follows. Catalyzes the formation of N(7)-methylguanine at position 46 (m7G46) in tRNA. This is tRNA (guanine-N(7)-)-methyltransferase from Lachnoclostridium phytofermentans (strain ATCC 700394 / DSM 18823 / ISDg) (Clostridium phytofermentans).